The chain runs to 485 residues: 1-aminocyclopropane-1-carboxylate synthase 2 (485 aa).

Residues glutamate 55 and tyrosine 92 each contribute to the substrate site. Lysine 278 is modified (N6-(pyridoxal phosphate)lysine). Serine 460 carries the phosphoserine modification.

The protein belongs to the class-I pyridoxal-phosphate-dependent aminotransferase family. In terms of assembly, homodimer and heterodimer. In vivo, the relevance of heterodimerization with other ACS enzymes is however unsure. Requires pyridoxal 5'-phosphate as cofactor. Post-translationally, phosphorylated on Ser 460; phosphorylation may regulate its turnover. In terms of processing, may be processed at its C-terminus.

The enzyme catalyses S-adenosyl-L-methionine = 1-aminocyclopropane-1-carboxylate + S-methyl-5'-thioadenosine + H(+). The protein operates within alkene biosynthesis; ethylene biosynthesis via S-adenosyl-L-methionine; ethylene from S-adenosyl-L-methionine: step 1/2. Its function is as follows. 1-aminocyclopropane-1-carboxylate synthase (ACS) enzymes catalyze the conversion of S-adenosyl-L-methionine (SAM) into 1-aminocyclopropane-1-carboxylate (ACC), a direct precursor of ethylene. This Solanum lycopersicum (Tomato) protein is 1-aminocyclopropane-1-carboxylate synthase 2 (ACS2).